We begin with the raw amino-acid sequence, 77 residues long: Small ribosomal subunit protein uS17 (77 aa).

The protein belongs to the universal ribosomal protein uS17 family. Part of the 30S ribosomal subunit.

Its function is as follows. One of the primary rRNA binding proteins, it binds specifically to the 5'-end of 16S ribosomal RNA. This Wolbachia sp. subsp. Brugia malayi (strain TRS) protein is Small ribosomal subunit protein uS17.